Reading from the N-terminus, the 195-residue chain is Rac-like GTP-binding protein ARAC4 (195 aa).

GTP contacts are provided by residues 12–19, 30–37, 59–63, and 117–120; these read GDGAVGKT, FPTDYVPT, DTAGQ, and TKLD. The Effector region motif lies at 34–42; sequence YVPTVFDNF. Cys192 is subject to Cysteine methyl ester. Residue Cys192 is the site of S-geranylgeranyl cysteine attachment. The propeptide at 193–195 is removed in mature form; that stretch reads AFL.

This sequence belongs to the small GTPase superfamily. Rho family. In terms of assembly, interacts with SPK1, ICR1, ICR5 and PIR. As to expression, ubiquitous.

The protein resides in the cytoplasm. The protein localises to the cell membrane. Functionally, inactive GDP-bound Rho GTPases reside in the cytosol, are found in a complex with Rho GDP-dissociation inhibitors (Rho GDIs), and are released from the GDI protein in order to translocate to membranes upon activation. Involved in cell polarity control during the actin-dependent tip growth of root hairs, thus regulating root hair length and root hair initiation. Contributes, in a SPK1-dependent manner, to the prevention of cortical microtubules organization into parallel arrays oriented perpendicular to the axis of cell elongation to limit anisotropic cell growth during petal development. May regulate a WAVE complex that activates the Arp2/3 complex. This chain is Rac-like GTP-binding protein ARAC4, found in Arabidopsis thaliana (Mouse-ear cress).